The sequence spans 208 residues: dITP/XTP pyrophosphatase (208 aa).

16-21 (TGNAGK) serves as a coordination point for substrate. Mg(2+)-binding residues include E46 and D75. The active-site Proton acceptor is D75. Residues S76, 155 to 158 (FGYD), K178, and 183 to 184 (HR) each bind substrate.

The protein belongs to the HAM1 NTPase family. Homodimer. Mg(2+) is required as a cofactor.

It catalyses the reaction XTP + H2O = XMP + diphosphate + H(+). The enzyme catalyses dITP + H2O = dIMP + diphosphate + H(+). It carries out the reaction ITP + H2O = IMP + diphosphate + H(+). Functionally, pyrophosphatase that catalyzes the hydrolysis of nucleoside triphosphates to their monophosphate derivatives, with a high preference for the non-canonical purine nucleotides XTP (xanthosine triphosphate), dITP (deoxyinosine triphosphate) and ITP. Seems to function as a house-cleaning enzyme that removes non-canonical purine nucleotides from the nucleotide pool, thus preventing their incorporation into DNA/RNA and avoiding chromosomal lesions. The polypeptide is dITP/XTP pyrophosphatase (Deinococcus deserti (strain DSM 17065 / CIP 109153 / LMG 22923 / VCD115)).